We begin with the raw amino-acid sequence, 161 residues long: SsrA-binding protein (161 aa).

Positions 1 to 23 (MATKKNEQIKGRTDGLVAENRRS) are disordered.

The protein belongs to the SmpB family.

The protein localises to the cytoplasm. In terms of biological role, required for rescue of stalled ribosomes mediated by trans-translation. Binds to transfer-messenger RNA (tmRNA), required for stable association of tmRNA with ribosomes. tmRNA and SmpB together mimic tRNA shape, replacing the anticodon stem-loop with SmpB. tmRNA is encoded by the ssrA gene; the 2 termini fold to resemble tRNA(Ala) and it encodes a 'tag peptide', a short internal open reading frame. During trans-translation Ala-aminoacylated tmRNA acts like a tRNA, entering the A-site of stalled ribosomes, displacing the stalled mRNA. The ribosome then switches to translate the ORF on the tmRNA; the nascent peptide is terminated with the 'tag peptide' encoded by the tmRNA and targeted for degradation. The ribosome is freed to recommence translation, which seems to be the essential function of trans-translation. The chain is SsrA-binding protein from Hyphomonas neptunium (strain ATCC 15444).